The following is a 188-amino-acid chain: Elongation factor P (188 aa).

Belongs to the elongation factor P family.

The protein localises to the cytoplasm. Its pathway is protein biosynthesis; polypeptide chain elongation. Involved in peptide bond synthesis. Stimulates efficient translation and peptide-bond synthesis on native or reconstituted 70S ribosomes in vitro. Probably functions indirectly by altering the affinity of the ribosome for aminoacyl-tRNA, thus increasing their reactivity as acceptors for peptidyl transferase. The polypeptide is Elongation factor P (Bifidobacterium longum (strain DJO10A)).